Reading from the N-terminus, the 129-residue chain is MGRMASPLRSKSSAPRVESTRHKETSTVRVETSSHREETSSHRVETSSRQVRTSSRQVETSQRHREGPSLTPSTKRLPQFLEVSSQHVETSSQCTETSSRHVRASSSLRVETTVHRVESPARQSARMAR.

The tract at residues 1–129 (MGRMASPLRS…PARQSARMAR (129 aa)) is disordered. Residues 18-46 (ESTRHKETSTVRVETSSHREETSSHRVET) are compositionally biased toward basic and acidic residues. A compositionally biased stretch (low complexity) spans 47 to 59 (SSRQVRTSSRQVE). Over residues 70–97 (LTPSTKRLPQFLEVSSQHVETSSQCTET) the composition is skewed to polar residues.

This is an uncharacterized protein from Mus musculus (Mouse).